A 410-amino-acid chain; its full sequence is D-amino acid dehydrogenase (410 aa).

Position 9–14 (Gly-9–Gly-14) interacts with FAD.

Belongs to the DadA oxidoreductase family. It depends on FAD as a cofactor.

Its subcellular location is the cell inner membrane. It catalyses the reaction a D-alpha-amino acid + a quinone + H2O = a 2-oxocarboxylate + a quinol + NH4(+). Catalyzes the oxidative deamination of D-amino acids. Has broad substrate specificity; is mostly active on D-proline, and to a lesser extent, on several other D-amino acids such as D-alanine, D-phenylalanine and D-serine. Mediates electron transport from D-proline to coenzyme Q1 in vitro, and is involved in the electron transport chain from D-proline to the c-type cytochrome in vivo. This is D-amino acid dehydrogenase from Helicobacter pylori (strain ATCC 700392 / 26695) (Campylobacter pylori).